A 287-amino-acid chain; its full sequence is Transcription initiation factor IIB 1 (287 aa).

The segment at histidine 3–threonine 31 adopts a TFIIB-type zinc-finger fold. Residues cysteine 7, cysteine 10, cysteine 23, and cysteine 26 each contribute to the Zn(2+) site. Over residues glutamate 40–glutamate 53 the composition is skewed to basic and acidic residues. The segment at glutamate 40–arginine 63 is disordered. 2 consecutive repeat copies span residues threonine 111–leucine 194 and glutamate 205–aspartate 286.

The protein belongs to the TFIIB family.

Stabilizes TBP binding to an archaeal box-A promoter. Also responsible for recruiting RNA polymerase II to the pre-initiation complex (DNA-TBP-TFIIB). The sequence is that of Transcription initiation factor IIB 1 from Halobacterium salinarum (strain ATCC 700922 / JCM 11081 / NRC-1) (Halobacterium halobium).